Consider the following 431-residue polypeptide: Transposase for insertion sequence element IS232 (431 aa).

In terms of domain architecture, HTH IS21-type spans 20–79 (PNFKKLMGNLKMKINKSQLARELNVDRRTIDKYLNGFTPKGTKNKTSKIDTYYEVIAALL). Residues 35 to 54 (KSQLARELNVDRRTIDKYLN) constitute a DNA-binding region (H-T-H motif). The region spanning 140–315 (YETPPGEQAQ…IPVFALKQEK (176 aa)) is the Integrase catalytic domain.

The protein belongs to the transposase IS21/IS408/IS1162 family.

Involved in the transposition of the insertion sequence. This Bacillus thuringiensis subsp. berliner protein is Transposase for insertion sequence element IS232.